The chain runs to 424 residues: 3-phosphoshikimate 1-carboxyvinyltransferase (424 aa).

Lysine 20, serine 21, and arginine 25 together coordinate 3-phosphoshikimate. Lysine 20 contacts phosphoenolpyruvate. Phosphoenolpyruvate contacts are provided by glycine 92 and arginine 120. 3-phosphoshikimate contacts are provided by serine 165, glutamine 167, aspartate 313, and lysine 340. Glutamine 167 is a binding site for phosphoenolpyruvate. The active-site Proton acceptor is aspartate 313. The phosphoenolpyruvate site is built by arginine 344 and arginine 386.

This sequence belongs to the EPSP synthase family. As to quaternary structure, monomer.

It is found in the cytoplasm. It carries out the reaction 3-phosphoshikimate + phosphoenolpyruvate = 5-O-(1-carboxyvinyl)-3-phosphoshikimate + phosphate. It participates in metabolic intermediate biosynthesis; chorismate biosynthesis; chorismate from D-erythrose 4-phosphate and phosphoenolpyruvate: step 6/7. Catalyzes the transfer of the enolpyruvyl moiety of phosphoenolpyruvate (PEP) to the 5-hydroxyl of shikimate-3-phosphate (S3P) to produce enolpyruvyl shikimate-3-phosphate and inorganic phosphate. The protein is 3-phosphoshikimate 1-carboxyvinyltransferase of Bacillus cytotoxicus (strain DSM 22905 / CIP 110041 / 391-98 / NVH 391-98).